The following is a 308-amino-acid chain: Ribonuclease HIII (308 aa).

Residues 91-308 (KNVIGSDEVG…TEKALKMVKK (218 aa)) enclose the RNase H type-2 domain. A divalent metal cation is bound by residues Asp97, Glu98, and Asp202.

The protein belongs to the RNase HII family. RnhC subfamily. Requires Mn(2+) as cofactor. It depends on Mg(2+) as a cofactor.

Its subcellular location is the cytoplasm. The catalysed reaction is Endonucleolytic cleavage to 5'-phosphomonoester.. In terms of biological role, endonuclease that specifically degrades the RNA of RNA-DNA hybrids. This is Ribonuclease HIII from Listeria monocytogenes serovar 1/2a (strain ATCC BAA-679 / EGD-e).